Consider the following 471-residue polypeptide: Glutamine synthetase (471 aa).

The region spanning 14–99 (QKIQMIDLKF…ICSIKEPRTG (86 aa)) is the GS beta-grasp domain. Positions 106 to 471 (PRVIAQKAID…PYEFYLYYDC (366 aa)) constitute a GS catalytic domain. Mg(2+)-binding residues include Glu131 and Glu133. Glu208 serves as a coordination point for ATP. Mg(2+) is bound by residues Glu213 and Glu221. L-glutamate-binding positions include 265 to 266 (NG) and Gly266. His270 lines the Mg(2+) pocket. ATP contacts are provided by residues 272 to 274 (HQS) and Ser274. L-glutamate contacts are provided by Arg322, Glu328, and Arg340. Arg340, Arg345, and Lys354 together coordinate ATP. Residue Glu359 participates in Mg(2+) binding. Arg361 provides a ligand contact to L-glutamate. Tyr399 bears the O-AMP-tyrosine mark.

It belongs to the glutamine synthetase family. In terms of assembly, oligomer of 12 subunits arranged in the form of two hexagons. Mg(2+) is required as a cofactor.

It localises to the cytoplasm. The enzyme catalyses L-glutamate + NH4(+) + ATP = L-glutamine + ADP + phosphate + H(+). Its activity is regulated as follows. The activity of this enzyme could be controlled by adenylation under conditions of abundant glutamine. Involved in nitrogen metabolism via ammonium assimilation. Catalyzes the ATP-dependent biosynthesis of glutamine from glutamate and ammonia. In Microchaete diplosiphon (Fremyella diplosiphon), this protein is Glutamine synthetase.